The chain runs to 36 residues: Kappa-actitoxin-Avd6a (36 aa).

One can recognise a ShKT domain in the interval 2 to 36 (CKDNFAAATCKHVKENKNCGSQKYATNCAKTCGKC). 3 cysteine pairs are disulfide-bonded: Cys-2–Cys-36, Cys-11–Cys-29, and Cys-20–Cys-33. Residues 24-25 (KY) are crucial for binding to potassium channels.

It belongs to the sea anemone type 1 potassium channel toxin family. Type 1b subfamily.

It localises to the secreted. The protein localises to the nematocyst. Functionally, blocks voltage-gated potassium channels Kv1.2/KCNA2 (IC(50)=140 nM). This is Kappa-actitoxin-Avd6a from Anemonia sulcata (Mediterranean snakelocks sea anemone).